The chain runs to 104 residues: MHPHLDVNNQKQCADLIRALEECHKSFGKFFGECNTIKYELKACLTKDRNDKARLNRENARMRKKVIEENRKKEEIEERILTDRILQQERKKSHANEGAGDNNN.

Residues 10-52 (QKQCADLIRALEECHKSFGKFFGECNTIKYELKACLTKDRNDK) form the CHCH domain. Short sequence motifs (cx9C motif) lie at residues 13 to 23 (CADLIRALEEC) and 34 to 44 (CNTIKYELKAC). Intrachain disulfides connect Cys13–Cys44 and Cys23–Cys34.

The protein belongs to the CMC family.

Its subcellular location is the mitochondrion inner membrane. Its function is as follows. Required for mitochondrial cytochrome c oxidase (COX) assembly and respiration. The polypeptide is COX assembly mitochondrial protein 1 (cmc1) (Schizosaccharomyces pombe (strain 972 / ATCC 24843) (Fission yeast)).